The primary structure comprises 196 residues: GTP cyclohydrolase 1 (196 aa).

The Zn(2+) site is built by Cys-86, His-89, and Cys-158.

It belongs to the GTP cyclohydrolase I family. In terms of assembly, toroid-shaped homodecamer, composed of two pentamers of five dimers.

The enzyme catalyses GTP + H2O = 7,8-dihydroneopterin 3'-triphosphate + formate + H(+). It functions in the pathway cofactor biosynthesis; 7,8-dihydroneopterin triphosphate biosynthesis; 7,8-dihydroneopterin triphosphate from GTP: step 1/1. The chain is GTP cyclohydrolase 1 from Clostridium botulinum (strain ATCC 19397 / Type A).